A 1724-amino-acid chain; its full sequence is Protein mono-ADP-ribosyltransferase PARP4 (1724 aa).

One can recognise a BRCT domain in the interval 1 to 94 (MVMGIFANCI…RLLDVKNYDP (94 aa)). A Nuclear localization signal motif is present at residues 19–25 (PQQQKKK). Residues 97-123 (PLDITPPPDQKASSSEVKTEGLCPDSA) are disordered. Residues threonine 101 and threonine 333 each carry the phosphothreonine modification. Residues 242 to 370 (SEQLQALLLE…ETNLSKPNPP (129 aa)) form the PARP alpha-helical domain. One can recognise a PARP catalytic domain in the interval 369–573 (PPSLAKYRAL…FSMPGDQIKD (205 aa)). In terms of domain architecture, VIT spans 607-735 (SSTKAGLQDA…KVLIKITYIT (129 aa)). In terms of domain architecture, VWFA spans 876–1046 (EVIICLDCSS…KQIEDQMTRL (171 aa)). Position 1236 is a phosphoserine (serine 1236). The Nuclear localization signal motif lies at 1237–1249 (KRKHRKIPFSKRK). Phosphoserine is present on serine 1335. Positions 1408 to 1452 (SAQSAPLQHPGGFTTRPSAGTFPELDSPQLHFSLPTDPDPIRGFG) are disordered. Arginine 1476 is subject to Asymmetric dimethylarginine. The residue at position 1504 (serine 1504) is a Phosphoserine. The interval 1562–1724 (VCIQHWQDAV…LHRVLHYSQG (163 aa)) is interaction with the major vault protein.

Belongs to the ARTD/PARP family. As to quaternary structure, component of the vault ribonucleoprotein particle, at least composed of MVP, PARP4 and one or more vault RNAs (vRNAs). Interacts with TEP1. Widely expressed; the highest levels are in the kidney; also detected in heart, placenta, lung, liver, skeletal muscle, spleen, leukocytes and pancreas.

Its subcellular location is the cytoplasm. The protein localises to the nucleus. It is found in the cytoskeleton. It localises to the spindle. The catalysed reaction is L-aspartyl-[protein] + NAD(+) = 4-O-(ADP-D-ribosyl)-L-aspartyl-[protein] + nicotinamide. It catalyses the reaction L-glutamyl-[protein] + NAD(+) = 5-O-(ADP-D-ribosyl)-L-glutamyl-[protein] + nicotinamide. Mono-ADP-ribosyltransferase that mediates mono-ADP-ribosylation of target proteins. In Homo sapiens (Human), this protein is Protein mono-ADP-ribosyltransferase PARP4.